Reading from the N-terminus, the 414-residue chain is Succinylornithine transaminase (414 aa).

Residue K260 is modified to N6-(pyridoxal phosphate)lysine.

The protein belongs to the class-III pyridoxal-phosphate-dependent aminotransferase family. AstC subfamily. Pyridoxal 5'-phosphate is required as a cofactor.

The enzyme catalyses N(2)-succinyl-L-ornithine + 2-oxoglutarate = N-succinyl-L-glutamate 5-semialdehyde + L-glutamate. It functions in the pathway amino-acid degradation; L-arginine degradation via AST pathway; L-glutamate and succinate from L-arginine: step 3/5. Functionally, catalyzes the transamination of N(2)-succinylornithine and alpha-ketoglutarate into N(2)-succinylglutamate semialdehyde and glutamate. Can also act as an acetylornithine aminotransferase. This is Succinylornithine transaminase from Yersinia pseudotuberculosis serotype O:1b (strain IP 31758).